The chain runs to 365 residues: Chorismate synthase (365 aa).

Positions 48 and 54 each coordinate NADP(+). FMN contacts are provided by residues 131–133 (RSS), 243–244 (NA), glycine 288, 303–307 (KPTSS), and arginine 329.

The protein belongs to the chorismate synthase family. Homotetramer. Requires FMNH2 as cofactor.

It carries out the reaction 5-O-(1-carboxyvinyl)-3-phosphoshikimate = chorismate + phosphate. Its pathway is metabolic intermediate biosynthesis; chorismate biosynthesis; chorismate from D-erythrose 4-phosphate and phosphoenolpyruvate: step 7/7. In terms of biological role, catalyzes the anti-1,4-elimination of the C-3 phosphate and the C-6 proR hydrogen from 5-enolpyruvylshikimate-3-phosphate (EPSP) to yield chorismate, which is the branch point compound that serves as the starting substrate for the three terminal pathways of aromatic amino acid biosynthesis. This reaction introduces a second double bond into the aromatic ring system. This chain is Chorismate synthase, found in Agrobacterium fabrum (strain C58 / ATCC 33970) (Agrobacterium tumefaciens (strain C58)).